The primary structure comprises 203 residues: FMN-dependent NADH:quinone oxidoreductase (203 aa).

Serine 143 to glycine 146 lines the FMN pocket.

The protein belongs to the azoreductase type 1 family. As to quaternary structure, homodimer. The cofactor is FMN.

It catalyses the reaction 2 a quinone + NADH + H(+) = 2 a 1,4-benzosemiquinone + NAD(+). The catalysed reaction is N,N-dimethyl-1,4-phenylenediamine + anthranilate + 2 NAD(+) = 2-(4-dimethylaminophenyl)diazenylbenzoate + 2 NADH + 2 H(+). Functionally, quinone reductase that provides resistance to thiol-specific stress caused by electrophilic quinones. In terms of biological role, also exhibits azoreductase activity. Catalyzes the reductive cleavage of the azo bond in aromatic azo compounds to the corresponding amines. The sequence is that of FMN-dependent NADH:quinone oxidoreductase from Streptococcus suis (strain 98HAH33).